The chain runs to 273 residues: Cbp/p300-interacting transactivator 2 (273 aa).

The disordered stretch occupies residues 137–204; the sequence is DLHPAAGHQM…GSGGSGSSNM (68 aa). Residues 165 to 200 show a composition bias toward gly residues; the sequence is STPGGSGGSSTPGGSGGSAGGGAGSSNSGGGSGGSG.

The protein belongs to the CITED family. Interacts (via C-terminus) with SMAD2. Interacts (via C-terminus) with SMAD3 (via MH2 domain). Interacts with LHX2 (via LIM domains). Interacts with WT1. Interacts (via C-terminus) with EP300 (via CH1 domain); the interaction is stimulated in response to hypoxia. Interacts with PPARA. Interacts (via C-terminus) with TFAP2A, TFAP2B and TFAP2C.

The protein localises to the nucleus. In terms of biological role, transcriptional coactivator of the p300/CBP-mediated transcription complex. Acts as a bridge, linking TFAP2 transcription factors and the p300/CBP transcriptional coactivator complex in order to stimulate TFAP2-mediated transcriptional activation. Positively regulates TGF-beta signaling through its association with the SMAD/p300/CBP-mediated transcriptional coactivator complex. Stimulates the peroxisome proliferator-activated receptors PPARA transcriptional activity. Enhances estrogen-dependent transactivation mediated by estrogen receptors. Also acts as a transcriptional corepressor; interferes with the binding of the transcription factors HIF1A or STAT2 and the p300/CBP transcriptional coactivator complex. Participates in sex determination and early gonad development by stimulating transcription activation of SRY. Plays a role in controlling left-right patterning during embryogenesis; potentiates transcriptional activation of NODAL-mediated gene transcription in the left lateral plate mesoderm (LPM). Plays an essential role in differentiation of the adrenal cortex from the adrenogonadal primordium (AGP); stimulates WT1-mediated transcription activation thereby up-regulating the nuclear hormone receptor NR5A1 promoter activity. Associates with chromatin to the PITX2 P1 promoter region. This Saguinus labiatus (Red-chested mustached tamarin) protein is Cbp/p300-interacting transactivator 2 (CITED2).